A 293-amino-acid polypeptide reads, in one-letter code: Homoserine kinase (293 aa).

84 to 94 provides a ligand contact to ATP; sequence PISRGLGSSSA.

The protein belongs to the GHMP kinase family. Homoserine kinase subfamily.

It is found in the cytoplasm. It catalyses the reaction L-homoserine + ATP = O-phospho-L-homoserine + ADP + H(+). The protein operates within amino-acid biosynthesis; L-threonine biosynthesis; L-threonine from L-aspartate: step 4/5. Its function is as follows. Catalyzes the ATP-dependent phosphorylation of L-homoserine to L-homoserine phosphate. This Wolinella succinogenes (strain ATCC 29543 / DSM 1740 / CCUG 13145 / JCM 31913 / LMG 7466 / NCTC 11488 / FDC 602W) (Vibrio succinogenes) protein is Homoserine kinase.